We begin with the raw amino-acid sequence, 494 residues long: Chromosomal replication initiator protein DnaA (494 aa).

The interval 1–103 is domain I, interacts with DnaA modulators; it reads MTTDPDPPFV…PVSDESDSGS (103 aa). Positions 94–117 are disordered; the sequence is PVSDESDSGSVASPAPVAAADPDD. The span at 101–113 shows a compositional bias: low complexity; sequence SGSVASPAPVAAA. Positions 104 to 153 are domain II; it reads VASPAPVAAADPDDDVVDDDLAARASAEESWPSYFTNRANRAAEDDATSV. The interval 154-370 is domain III, AAA+ region; that stretch reads NLNRRYTFDT…GALIRVTAFA (217 aa). Residues G198, G200, K201, and T202 each coordinate ATP. Positions 371-494 are domain IV, binds dsDNA; sequence SLNKTPIDKS…TTRIRQRAKR (124 aa).

The protein belongs to the DnaA family. In terms of assembly, oligomerizes as a right-handed, spiral filament on DNA at oriC.

The protein resides in the cytoplasm. Its function is as follows. Plays an essential role in the initiation and regulation of chromosomal replication. ATP-DnaA binds to the origin of replication (oriC) to initiate formation of the DNA replication initiation complex once per cell cycle. Binds the DnaA box (a 9 base pair repeat at the origin) and separates the double-stranded (ds)DNA. Forms a right-handed helical filament on oriC DNA; dsDNA binds to the exterior of the filament while single-stranded (ss)DNA is stabiized in the filament's interior. The ATP-DnaA-oriC complex binds and stabilizes one strand of the AT-rich DNA unwinding element (DUE), permitting loading of DNA polymerase. After initiation quickly degrades to an ADP-DnaA complex that is not apt for DNA replication. Binds acidic phospholipids. The polypeptide is Chromosomal replication initiator protein DnaA (Mycolicibacterium vanbaalenii (strain DSM 7251 / JCM 13017 / BCRC 16820 / KCTC 9966 / NRRL B-24157 / PYR-1) (Mycobacterium vanbaalenii)).